Consider the following 282-residue polypeptide: Glycine betaine transport system permease protein OpuAB (282 aa).

At M1–D18 the chain is on the extracellular side. The helical transmembrane segment at W19–V39 threads the bilayer. The Cytoplasmic segment spans residues N40–T44. Residues G45–I65 form a helical membrane-spanning segment. Over S66–G69 the chain is Extracellular. Residues I70–M90 form a helical membrane-spanning segment. Residues M90–T269 form the ABC transmembrane type-1 domain. The Cytoplasmic segment spans residues L91–T93. Residues L94 to W114 traverse the membrane as a helical segment. The Extracellular portion of the chain corresponds to A115–A137. The chain crosses the membrane as a helical span at residues F138–A158. The Cytoplasmic portion of the chain corresponds to S159–Q215. The chain crosses the membrane as a helical span at residues S216–G236. Over S237 to A242 the chain is Extracellular. A helical transmembrane segment spans residues V243–I263. Over T264 to A282 the chain is Cytoplasmic.

This sequence belongs to the binding-protein-dependent transport system permease family. CysTW subfamily. The complex is composed of two ATP-binding proteins (OpuAA), two transmembrane proteins (OpuAB) and a solute-binding protein (OpuAC).

The protein localises to the cell membrane. Functionally, involved in a multicomponent binding-protein-dependent transport system for glycine betaine; probably responsible for the translocation of the substrate across the membrane. This Bacillus subtilis (strain 168) protein is Glycine betaine transport system permease protein OpuAB (opuAB).